We begin with the raw amino-acid sequence, 202 residues long: Orotate phosphoribosyltransferase (202 aa).

5-phospho-alpha-D-ribose 1-diphosphate is bound by residues lysine 93 and glutamate 113 to serine 121. Threonine 117 and arginine 145 together coordinate orotate.

It belongs to the purine/pyrimidine phosphoribosyltransferase family. PyrE subfamily. In terms of assembly, homodimer. The cofactor is Mg(2+).

The enzyme catalyses orotidine 5'-phosphate + diphosphate = orotate + 5-phospho-alpha-D-ribose 1-diphosphate. It participates in pyrimidine metabolism; UMP biosynthesis via de novo pathway; UMP from orotate: step 1/2. Its function is as follows. Catalyzes the transfer of a ribosyl phosphate group from 5-phosphoribose 1-diphosphate to orotate, leading to the formation of orotidine monophosphate (OMP). In Campylobacter fetus subsp. fetus (strain 82-40), this protein is Orotate phosphoribosyltransferase.